The following is a 241-amino-acid chain: Serine protease 58 (241 aa).

The signal sequence occupies residues 1–17; sequence MKFILLWALLNLTVALA. Positions 18-239 constitute a Peptidase S1 domain; it reads FNPDYTVSST…YIPWIENVIQ (222 aa). Cys-41 and Cys-57 are disulfide-bonded. Catalysis depends on charge relay system residues His-56 and Asp-101. Cystine bridges form between Cys-133–Cys-201, Cys-165–Cys-180, and Cys-191–Cys-215. Asn-156 and Asn-173 each carry an N-linked (GlcNAc...) asparagine glycan. The Charge relay system role is filled by Ser-195.

The protein belongs to the peptidase S1 family.

Its subcellular location is the secreted. It catalyses the reaction Preferential cleavage: Arg-|-Xaa, Lys-|-Xaa.. In Homo sapiens (Human), this protein is Serine protease 58 (PRSS58).